A 612-amino-acid polypeptide reads, in one-letter code: UvrABC system protein C (612 aa).

The GIY-YIG domain maps to 20–98 (THSGVYRMLD…IKQHRPKYNI (79 aa)). The region spanning 208-243 (SSVLEEISANMYQASEDMEYEKAQVYRDQLVVLRKL) is the UVR domain.

The protein belongs to the UvrC family. Interacts with UvrB in an incision complex.

The protein localises to the cytoplasm. In terms of biological role, the UvrABC repair system catalyzes the recognition and processing of DNA lesions. UvrC both incises the 5' and 3' sides of the lesion. The N-terminal half is responsible for the 3' incision and the C-terminal half is responsible for the 5' incision. This chain is UvrABC system protein C, found in Francisella tularensis subsp. holarctica (strain LVS).